The following is a 149-amino-acid chain: Ribonuclease pancreatic (149 aa).

Positions 1–25 (MGLEKSLILFPLLVLVLGWVQPSLA) are cleaved as a signal peptide. Positions 32 and 35 each coordinate substrate. H37 acts as the Proton acceptor in catalysis. Intrachain disulfides connect C51–C109, C65–C120, C83–C135, and C90–C97. Residues 66-70 (KPVNT), K91, and R110 each bind substrate. H144 acts as the Proton donor in catalysis.

Belongs to the pancreatic ribonuclease family. As to quaternary structure, monomer. Interacts with and forms tight 1:1 complexes with RNH1. Dimerization of two such complexes may occur. Interaction with RNH1 inhibits this protein. In terms of tissue distribution, pancreas.

The protein localises to the secreted. The enzyme catalyses an [RNA] containing cytidine + H2O = an [RNA]-3'-cytidine-3'-phosphate + a 5'-hydroxy-ribonucleotide-3'-[RNA].. The catalysed reaction is an [RNA] containing uridine + H2O = an [RNA]-3'-uridine-3'-phosphate + a 5'-hydroxy-ribonucleotide-3'-[RNA].. In terms of biological role, endonuclease that catalyzes the cleavage of RNA on the 3' side of pyrimidine nucleotides. Acts on single-stranded and double-stranded RNA. This is Ribonuclease pancreatic (RNASE1) from Uranomys ruddi (White-bellied brush-furred rat).